We begin with the raw amino-acid sequence, 246 residues long: Putative L,D-transpeptidase YafK (246 aa).

A signal peptide spans 1-19 (MRKIALILAMLLIPCVSFA). The 131-residue stretch at 44–174 (VYIQIFKEER…GQPSVQVSIY (131 aa)) folds into the L,D-TPase catalytic domain. The Proton donor/acceptor role is filled by His-135. The active-site Nucleophile is the Cys-143.

This sequence belongs to the YkuD family.

It participates in cell wall biogenesis; peptidoglycan biosynthesis. This is Putative L,D-transpeptidase YafK (yafK) from Escherichia coli O157:H7.